A 147-amino-acid polypeptide reads, in one-letter code: HTH-type transcriptional regulator MntR (147 aa).

The HTH dtxR-type domain maps to 1–63; it reads MPTPSMEDYI…YEKYRGFVLT (63 aa). Residues Asp8, Glu11, His77, Glu99, Glu102, and His103 each coordinate Mn(2+).

The protein belongs to the DtxR/MntR family. In terms of assembly, homodimer.

The protein localises to the cytoplasm. DNA binding is strongly activated by Mn(2+). Functionally, central regulator of manganese homeostasis. This chain is HTH-type transcriptional regulator MntR, found in Oceanobacillus iheyensis (strain DSM 14371 / CIP 107618 / JCM 11309 / KCTC 3954 / HTE831).